The following is a 635-amino-acid chain: Threonine--tRNA ligase (635 aa).

The region spanning 1 to 58 (MIHVTCNQEAFELPEGASAMDLANKMKQSHCFAGALINDQEKDLSTTLQDGDTVLFLT) is the TGS domain. Residues 237 to 528 (DHRVLGTKLD…LIEHFKGRFP (292 aa)) form a catalytic region. The Zn(2+) site is built by Cys-328, His-379, and His-505.

The protein belongs to the class-II aminoacyl-tRNA synthetase family. Homodimer. Zn(2+) is required as a cofactor.

The protein localises to the cytoplasm. It carries out the reaction tRNA(Thr) + L-threonine + ATP = L-threonyl-tRNA(Thr) + AMP + diphosphate + H(+). Catalyzes the attachment of threonine to tRNA(Thr) in a two-step reaction: L-threonine is first activated by ATP to form Thr-AMP and then transferred to the acceptor end of tRNA(Thr). Also edits incorrectly charged L-seryl-tRNA(Thr). The protein is Threonine--tRNA ligase of Chlamydia trachomatis serovar A (strain ATCC VR-571B / DSM 19440 / HAR-13).